The following is an 84-amino-acid chain: Anthracycline acyl carrier protein DauA (84 aa).

A Carrier domain is found at 3-80 (ELSLAELREI…SMLIFVNERL (78 aa)). Ser-40 carries the post-translational modification O-(pantetheine 4'-phosphoryl)serine.

The protein operates within antibiotic biosynthesis; daunorubicin biosynthesis. Its pathway is antibiotic biosynthesis; carminomycin biosynthesis. It participates in antibiotic biosynthesis; rhodomycin biosynthesis. It functions in the pathway antibiotic biosynthesis; aclacinomycin biosynthesis. Involved in the biosynthesis of aklanonate which is an important precursor common to the formation of the clinically significant anthracyclines such as carminomycin, daunorubicin (daunomycin), rhodomycin, aclacinomycin T (aklavin) and aclacinomycin A (aclarubicin). These compounds are aromatic polyketide antibiotics that exhibit high cytotoxicity and are widely applied in the chemotherapy of a variety of cancers. The protein is Anthracycline acyl carrier protein DauA (dauA) of Streptomyces sp. (strain C5).